We begin with the raw amino-acid sequence, 123 residues long: Large ribosomal subunit protein eL8 (123 aa).

The protein belongs to the eukaryotic ribosomal protein eL8 family. Part of the 50S ribosomal subunit. Probably part of the RNase P complex.

The protein localises to the cytoplasm. Functionally, multifunctional RNA-binding protein that recognizes the K-turn motif in ribosomal RNA, the RNA component of RNase P, box H/ACA, box C/D and box C'/D' sRNAs. This Methanopyrus kandleri (strain AV19 / DSM 6324 / JCM 9639 / NBRC 100938) protein is Large ribosomal subunit protein eL8.